The sequence spans 322 residues: Ras-like protein 2 (322 aa).

Residues 20–25 (GVGKSA), 36–42 (VDEYDPT), 66–67 (AG), and 123–126 (NKSD) contribute to the GTP site. The short motif at 39–47 (YDPTIEDSY) is the Effector region element. A Glycyl lysine isopeptide (Lys-Gly) (interchain with G-Cter in ubiquitin) cross-link involves residue K131. 153–155 (SAK) is a GTP binding site. Residues 178-322 (YNKTLTENDN…SGSGGCCIIS (145 aa)) form a disordered region. Polar residues predominate over residues 180-205 (KTLTENDNSKQTSQDTKGSGANSVPR). A phosphoserine mark is found at S198, S202, S207, S214, S235, and S238. Polar residues predominate over residues 215 to 252 (NAANGKNVNSSTTVVNARNASIESKTGLAGNQATNGKT). Positions 261–284 (NSTGQAGQANAQSANTVNNRVNNN) are enriched in low complexity. Polar residues predominate over residues 285-294 (SKAGQVSNAK). The S-palmitoyl cysteine moiety is linked to residue C318. C319 carries the post-translational modification Cysteine methyl ester. The S-farnesyl cysteine moiety is linked to residue C319. A propeptide spans 320-322 (IIS) (removed in mature form).

Belongs to the small GTPase superfamily. Ras family. In terms of processing, farnesylated by RAM1-RAM2, which is required for targeting RAS2 to the cytoplasmic site of the endoplasmic reticulum, where proteolytic processing of the C-terminus by RCE1 and methylation of the resulting carboxyl group by STE14 occurs. Palmitoylated by the ERF2-SHR5 complex, which is required for proper plasma membrane localization of RAS2.

Its subcellular location is the cell membrane. The enzyme catalyses GTP + H2O = GDP + phosphate + H(+). Its activity is regulated as follows. Alternates between an inactive form bound to GDP and an active form bound to GTP. Activated by guanine nucleotide-exchange factor (GEF) CDC25 and inactivated by GTPase-activating proteins (GAPs) IRA1 and IRA2. In terms of biological role, the S.cerevisiae Ras proteins modulate the activity of the adenylate cyclase catalytic subunit and therefore affect the biosynthesis of cyclic-AMP. This Saccharomyces cerevisiae (strain ATCC 204508 / S288c) (Baker's yeast) protein is Ras-like protein 2 (RAS2).